A 311-amino-acid polypeptide reads, in one-letter code: Triacylglycerol lipase (311 aa).

The N-terminal stretch at 1–26 (MKKKSLLPLGLAIGLASLAASPLIQA) is a signal peptide. The region spanning 35 to 280 (PIVLAHGMLG…DNYRMNHLDE (246 aa)) is the AB hydrolase-1 domain. Position 42 (Met42) interacts with substrate. The Nucleophile role is filled by Ser108. His109 contributes to the substrate binding site. Cys209 and Cys261 form a disulfide bridge. Asp235 provides a ligand contact to Ca(2+). Residues Asp255 and His277 each act as charge relay system in the active site. Ca(2+) contacts are provided by Asp279, Gln283, and Leu287.

Belongs to the AB hydrolase superfamily. Pseudomonas lipase family. In terms of assembly, monomer. Ca(2+) is required as a cofactor.

Its subcellular location is the secreted. The catalysed reaction is a triacylglycerol + H2O = a diacylglycerol + a fatty acid + H(+). Na(+) increases lipase activity. Inhibited by diethyl p-nitrophenyl phosphate and 3,4-dichloroisocoumarin (DCI). Catalyzes the hydrolysis of triacylglycerol. It also exhibits some esterase activity with p-nitrophenyl acetate and Tween 80 as substrates, however the lipase activity is approximately eight times the esterase activity. It shows a marked specificity for the 1,3-oleyl residues of triolein. This chain is Triacylglycerol lipase, found in Pseudomonas aeruginosa (strain ATCC 15692 / DSM 22644 / CIP 104116 / JCM 14847 / LMG 12228 / 1C / PRS 101 / PAO1).